Consider the following 248-residue polypeptide: Probable transcriptional regulatory protein Nwi_2729 (248 aa).

Positions 1–21 (MAGHSQFKNIMHRKGRQDAQK) are disordered.

This sequence belongs to the TACO1 family.

The protein resides in the cytoplasm. The sequence is that of Probable transcriptional regulatory protein Nwi_2729 from Nitrobacter winogradskyi (strain ATCC 25391 / DSM 10237 / CIP 104748 / NCIMB 11846 / Nb-255).